A 428-amino-acid chain; its full sequence is Tyrosine--tRNA ligase (428 aa).

Tyr-36 lines the L-tyrosine pocket. Positions 41–50 match the 'HIGH' region motif; the sequence is PTARSLHIGS. L-tyrosine-binding residues include Tyr-169 and Gln-173. A 'KMSKS' region motif is present at residues 229-233; sequence KMGKT. Residue Lys-232 participates in ATP binding. The region spanning 361–427 is the S4 RNA-binding domain; it reads IPAYEIMHEC…GKKKYMIIKV (67 aa).

Belongs to the class-I aminoacyl-tRNA synthetase family. TyrS type 1 subfamily. Homodimer.

It is found in the cytoplasm. It carries out the reaction tRNA(Tyr) + L-tyrosine + ATP = L-tyrosyl-tRNA(Tyr) + AMP + diphosphate + H(+). Catalyzes the attachment of tyrosine to tRNA(Tyr) in a two-step reaction: tyrosine is first activated by ATP to form Tyr-AMP and then transferred to the acceptor end of tRNA(Tyr). This chain is Tyrosine--tRNA ligase, found in Syntrophus aciditrophicus (strain SB).